We begin with the raw amino-acid sequence, 480 residues long: Gamma-aminobutyric acid receptor subunit rho-1 (480 aa).

The first 21 residues, methionine 1–alanine 21, serve as a signal peptide directing secretion. Residues alanine 22–histidine 281 lie on the Extracellular side of the membrane. Residues proline 29–arginine 38 show a composition bias toward basic and acidic residues. Residues proline 29–aspartate 67 form a disordered region. Basic residues predominate over residues lysine 39–arginine 48. Arginine 126 provides a ligand contact to 4-aminobutanoate. N-linked (GlcNAc...) asparagine glycosylation is present at asparagine 141. A 4-aminobutanoate-binding site is contributed by serine 190. Cysteine 199 and cysteine 213 are joined by a disulfide. Glutamate 218 provides a ligand contact to 4-aminobutanoate. N-linked (GlcNAc...) asparagine glycosylation is found at asparagine 235 and asparagine 275. A helical membrane pass occupies residues isoleucine 282 to valine 302. Topologically, residues serine 303–arginine 314 are cytoplasmic. The helical transmembrane segment at valine 315–serine 335 threads the bilayer. The Extracellular portion of the chain corresponds to methionine 336–aspartate 346. The helical transmembrane segment at isoleucine 347–asparagine 367 threads the bilayer. Residues tyrosine 368–lysine 458 lie on the Cytoplasmic side of the membrane. Residues tyrosine 459 to phenylalanine 479 traverse the membrane as a helical segment. Serine 480 is a topological domain (extracellular).

This sequence belongs to the ligand-gated ion channel (TC 1.A.9) family. Gamma-aminobutyric acid receptor (TC 1.A.9.5) subfamily. GABRR1 sub-subfamily. Three rho subunits (rho-1/GBRR1, rho-2/GBRR2 and rho-3/GBRR3) coassemble either to form functional homopentamers or heteropentamers. Rho-1/GBRR1 subunits can also associate with alpha-1/GBRA1 subunits to form a functional GABAAR. Interacts with SQSTM1. Expressed in the cerebellum.

It localises to the postsynaptic cell membrane. The protein resides in the cell membrane. The enzyme catalyses chloride(in) = chloride(out). Its activity is regulated as follows. Inhibited by TPMPA, a rho-specific antagonist, when forming a homopentamer. In contrast with other GABAARs, rho-1 GABAAR is not inhibited by bicuculline when forming a homopentamer. In terms of biological role, rho subunit of the pentameric ligand-gated chloride channels responsible for mediating the effects of gamma-aminobutyric acid (GABA), the major inhibitory neurotransmitter in the brain. Rho-containing GABA-gated chloride channels are a subclass of GABA(A) receptors (GABAARs) entirely composed of rho subunits, where GABA molecules bind at the rho intersubunit interfaces. When activated by GABA, rho-GABAARs selectively allow the flow of chloride anions across the cell membrane down their electrochemical gradient. Rho-1 subunits are primarily expressed in retina where rho-1-containing GABAARs play a role in retinal neurotransmission. Rho-1 GABAARs are also involved in neuronal tonic (extrasynaptic) and phasic (synaptic) transmission in the Purkinje neurons of the cerebellum. Rho-1 GABAARs may also contribute to the regulation of glial development in the cerebellum by controlling extrasynaptic transmission. The protein is Gamma-aminobutyric acid receptor subunit rho-1 of Mus musculus (Mouse).